A 445-amino-acid polypeptide reads, in one-letter code: Guanosine nucleotide diphosphate dissociation inhibitor At5g09550 (445 aa).

It belongs to the Rab GDI family.

Regulates the GDP/GTP exchange reaction of most RAB proteins by inhibiting the dissociation of GDP from them, and the subsequent binding of GTP. The polypeptide is Guanosine nucleotide diphosphate dissociation inhibitor At5g09550 (Arabidopsis thaliana (Mouse-ear cress)).